Here is a 73-residue protein sequence, read N- to C-terminus: Large ribosomal subunit protein bL31 (73 aa).

It belongs to the bacterial ribosomal protein bL31 family. Type A subfamily. Part of the 50S ribosomal subunit.

Its function is as follows. Binds the 23S rRNA. This Chelativorans sp. (strain BNC1) protein is Large ribosomal subunit protein bL31.